The primary structure comprises 349 residues: N-acetyltaurine hydrolase (349 aa).

Residues His-26, His-28, Glu-169, His-201, His-230, and Asp-298 each contribute to the a divalent metal cation site.

The protein belongs to the metallo-dependent hydrolases superfamily. Phosphotriesterase family. A divalent metal cation serves as cofactor.

It localises to the cytoplasm. The protein localises to the cytosol. The enzyme catalyses N-acetyltaurine + H2O = taurine + acetate. It carries out the reaction N-propanoyltaurine + H2O = propanoate + taurine. It catalyses the reaction N-acetyl-L-methionine + H2O = L-methionine + acetate. The catalysed reaction is N-acetyl-L-isoleucine + H2O = L-isoleucine + acetate. The enzyme catalyses N-acetyl-L-leucine + H2O = L-leucine + acetate. It carries out the reaction N-acetyl-L-valine + H2O = L-valine + acetate. Functionally, N-acetyltaurine hydrolase that catalyzes the hydrolysis of N-acetyltaurine into taurine and acetate. PTER also acts on other N-acetyl amino acids (Met, Ile, Leu, Val) and N-propionyltaurine, but at lower rates. The chain is N-acetyltaurine hydrolase (pter) from Xenopus tropicalis (Western clawed frog).